A 225-amino-acid polypeptide reads, in one-letter code: Flagellar transcriptional regulator FlhC (225 aa).

Zn(2+) is bound by residues C149, C152, C169, and C172.

The protein belongs to the FlhC family. As to quaternary structure, heterohexamer composed of two FlhC and four FlhD subunits. Each FlhC binds a FlhD dimer, forming a heterotrimer, and a hexamer assembles by dimerization of two heterotrimers. Zn(2+) is required as a cofactor.

Its subcellular location is the cytoplasm. Functionally, functions in complex with FlhD as a master transcriptional regulator that regulates transcription of several flagellar and non-flagellar operons by binding to their promoter region. Activates expression of class 2 flagellar genes, including fliA, which is a flagellum-specific sigma factor that turns on the class 3 genes. Also regulates genes whose products function in a variety of physiological pathways. This Burkholderia lata (strain ATCC 17760 / DSM 23089 / LMG 22485 / NCIMB 9086 / R18194 / 383) protein is Flagellar transcriptional regulator FlhC.